Consider the following 617-residue polypeptide: uncharacterized protein (617 aa).

A helical transmembrane segment spans residues 103-123 (AGVLLAKFFPLLFLYPLTYLA). Residues 200–609 (FETREPVGSG…DILEAAKPFL (410 aa)) form the Protein kinase domain. Residues 206–214 (VGSGCVAQV) and Lys302 contribute to the ATP site. The Proton acceptor role is filled by Asp436.

This sequence belongs to the protein kinase superfamily. ADCK protein kinase family.

It localises to the mitochondrion. It is found in the membrane. Its function is as follows. The function of this protein is not yet clear. It is not known if it has protein kinase activity and what type of substrate it would phosphorylate (Ser, Thr or Tyr). Involved in the mitochondrial import of CoQ precursors, plays a role in muscle mitochondrial function and fatty acid beta-oxidation. This is an uncharacterized protein from Mus musculus (Mouse).